The following is a 216-amino-acid chain: Protein-L-isoaspartate O-methyltransferase (216 aa).

Residue Ser-61 is part of the active site.

This sequence belongs to the methyltransferase superfamily. L-isoaspartyl/D-aspartyl protein methyltransferase family.

The protein localises to the cytoplasm. The catalysed reaction is [protein]-L-isoaspartate + S-adenosyl-L-methionine = [protein]-L-isoaspartate alpha-methyl ester + S-adenosyl-L-homocysteine. Functionally, catalyzes the methyl esterification of L-isoaspartyl residues in peptides and proteins that result from spontaneous decomposition of normal L-aspartyl and L-asparaginyl residues. It plays a role in the repair and/or degradation of damaged proteins. The protein is Protein-L-isoaspartate O-methyltransferase (pcm) of Pyrococcus abyssi (strain GE5 / Orsay).